We begin with the raw amino-acid sequence, 2111 residues long: Mycocerosic acid synthase-like polyketide synthase (2111 aa).

Positions 1-15 (MTQNCVAPVAIIGMA) are cleaved as a signal peptide. The N-palmitoyl cysteine moiety is linked to residue Cys16. A lipid anchor (S-diacylglycerol cysteine) is attached at Cys16. The 413-residue stretch at 16–428 (CRLPGAINSP…GTNVHAVLEQ (413 aa)) folds into the Ketosynthase family 3 (KS3) domain. The active-site Acyl-thioester intermediate; for beta-ketoacyl synthase activity is the Cys178. Active-site for beta-ketoacyl synthase activity residues include His313 and His349. The interval 430–537 (PESPAETAAE…MPQQAVTNDD (108 aa)) is linker domain (LD). Residues 538-837 (RGPVWVFSGQ…LAVFAAMRRQ (300 aa)) form an acyltransferase (AT) region. Residue Ser629 is the Acyl-ester intermediate; for acyltransferase activity of the active site. The tract at residues 896 to 1176 (PSVSVHPLLG…LSAMGLQLGT (281 aa)) is dehydratase (DH). The interval 901 to 1025 (HPLLGSHVVL…GDVDAERPAA (125 aa)) is N-terminal hotdog fold. Positions 901–1183 (HPLLGSHVVL…LGTGNSDKAE (283 aa)) constitute a PKS/mFAS DH domain. Residue His934 is the Proton acceptor; for dehydratase activity of the active site. Positions 1036–1183 (PNRVDGDELR…LGTGNSDKAE (148 aa)) are C-terminal hotdog fold. Asp1100 serves as the catalytic Proton donor; for dehydratase activity. A pseudo beta-ketoacyl reductase (PsiKR) region spans residues 1215 to 1391 (SWLVILAGDD…SPEDETAWRD (177 aa)). An enoylreductase (ER) region spans residues 1419-1743 (EGMRLVVRNP…QHTGKLVIDI (325 aa)). The segment at 1765 to 2008 (GAYVITGGLG…RSPFAELFLA (244 aa)) is beta-ketoacyl reductase (KR). NADP(+)-binding positions include 1773–1776 (LGGL), 1796–1799 (SRSA), 1824–1825 (DI), and 1902–1903 (FS). Positions 2029 to 2104 (EEWPTHLRRL…QRLCEMLDTD (76 aa)) constitute a Carrier domain. O-(pantetheine 4'-phosphoryl)serine is present on Ser2064.

Homodimer.

Its subcellular location is the cell membrane. Its pathway is lipid metabolism; fatty acid biosynthesis. Polyketide synthase involved in the biosynthesis of 2,4-dimethyl-2-eicosenoic acid, a lipid component of the lipooligosaccharides (LOS) which are not located at the bacterial surface but rather in deeper compartments of the cell envelope of M.smegmatis. This is Mycocerosic acid synthase-like polyketide synthase from Mycolicibacterium smegmatis (strain ATCC 700084 / mc(2)155) (Mycobacterium smegmatis).